A 360-amino-acid polypeptide reads, in one-letter code: Isopentenyl-diphosphate delta-isomerase (360 aa).

12-13 (RK) is a binding site for substrate. Residues S70, 71 to 73 (SMT), S101, and N130 each bind FMN. Substrate is bound at residue 101–103 (SMR). Residue Q165 coordinates substrate. Residue E166 coordinates Mg(2+). FMN is bound by residues K197, 288-290 (GIR), and 309-310 (AG).

This sequence belongs to the IPP isomerase type 2 family. As to quaternary structure, homooctamer. Dimer of tetramers. It depends on FMN as a cofactor. NADPH serves as cofactor. Requires Mg(2+) as cofactor.

The protein resides in the cytoplasm. It catalyses the reaction isopentenyl diphosphate = dimethylallyl diphosphate. Functionally, involved in the biosynthesis of isoprenoids. Catalyzes the 1,3-allylic rearrangement of the homoallylic substrate isopentenyl (IPP) to its allylic isomer, dimethylallyl diphosphate (DMAPP). This chain is Isopentenyl-diphosphate delta-isomerase, found in Chlorobium limicola (strain DSM 245 / NBRC 103803 / 6330).